A 313-amino-acid polypeptide reads, in one-letter code: Acetyl-coenzyme A carboxylase carboxyl transferase subunit alpha (313 aa).

The 262-residue stretch at 30–291 (DLDREISDLE…KMALLQELAF (262 aa)) folds into the CoA carboxyltransferase C-terminal domain.

Belongs to the AccA family. In terms of assembly, acetyl-CoA carboxylase is a heterohexamer composed of biotin carboxyl carrier protein (AccB), biotin carboxylase (AccC) and two subunits each of ACCase subunit alpha (AccA) and ACCase subunit beta (AccD).

Its subcellular location is the cytoplasm. It carries out the reaction N(6)-carboxybiotinyl-L-lysyl-[protein] + acetyl-CoA = N(6)-biotinyl-L-lysyl-[protein] + malonyl-CoA. It functions in the pathway lipid metabolism; malonyl-CoA biosynthesis; malonyl-CoA from acetyl-CoA: step 1/1. In terms of biological role, component of the acetyl coenzyme A carboxylase (ACC) complex. First, biotin carboxylase catalyzes the carboxylation of biotin on its carrier protein (BCCP) and then the CO(2) group is transferred by the carboxyltransferase to acetyl-CoA to form malonyl-CoA. The protein is Acetyl-coenzyme A carboxylase carboxyl transferase subunit alpha of Zymomonas mobilis subsp. mobilis (strain ATCC 31821 / ZM4 / CP4).